The following is a 22-amino-acid chain: Unknown protein 10 (22 aa).

The protein is Unknown protein 10 of Pseudotsuga menziesii (Douglas-fir).